We begin with the raw amino-acid sequence, 490 residues long: Ketol-acid reductoisomerase (NADP(+)) (490 aa).

Residues 17 to 208 enclose the KARI N-terminal Rossmann domain; it reads LAQCEFMNAD…GGHRAGVLKS (192 aa). NADP(+) is bound by residues 45–48, Arg68, Arg76, Ser78, and 108–110; these read CGAQ and DKQ. His132 is an active-site residue. Gly158 lines the NADP(+) pocket. KARI C-terminal knotted domains lie at 209-353 and 355-486; these read SFIA…AEQE and FDNG…MSAM. Residues Asp217, Glu221, Glu389, and Glu393 each contribute to the Mg(2+) site. Substrate is bound at residue Ser414.

Belongs to the ketol-acid reductoisomerase family. The cofactor is Mg(2+).

The catalysed reaction is (2R)-2,3-dihydroxy-3-methylbutanoate + NADP(+) = (2S)-2-acetolactate + NADPH + H(+). It carries out the reaction (2R,3R)-2,3-dihydroxy-3-methylpentanoate + NADP(+) = (S)-2-ethyl-2-hydroxy-3-oxobutanoate + NADPH + H(+). The protein operates within amino-acid biosynthesis; L-isoleucine biosynthesis; L-isoleucine from 2-oxobutanoate: step 2/4. It participates in amino-acid biosynthesis; L-valine biosynthesis; L-valine from pyruvate: step 2/4. Its function is as follows. Involved in the biosynthesis of branched-chain amino acids (BCAA). Catalyzes an alkyl-migration followed by a ketol-acid reduction of (S)-2-acetolactate (S2AL) to yield (R)-2,3-dihydroxy-isovalerate. In the isomerase reaction, S2AL is rearranged via a Mg-dependent methyl migration to produce 3-hydroxy-3-methyl-2-ketobutyrate (HMKB). In the reductase reaction, this 2-ketoacid undergoes a metal-dependent reduction by NADPH to yield (R)-2,3-dihydroxy-isovalerate. The polypeptide is Ketol-acid reductoisomerase (NADP(+)) (Pseudoalteromonas translucida (strain TAC 125)).